The sequence spans 214 residues: Membrane-spanning 4-domains subfamily A member 3 (214 aa).

Residues Met1–Thr31 are disordered. Residues Met1 to Gln49 lie on the Cytoplasmic side of the membrane. Residues Val50–Gly70 traverse the membrane as a helical segment. The Extracellular portion of the chain corresponds to Ser71–His81. Residues Phe82–Ser102 form a helical membrane-spanning segment. Topologically, residues Gly103–Met124 are cytoplasmic. Residues Asn125–Val145 form a helical membrane-spanning segment. Residues Asn146–Ser175 are Extracellular-facing. A helical membrane pass occupies residues Leu176–Cys196. Residues Asn197–Val214 are Cytoplasmic-facing.

This sequence belongs to the MS4A family. In terms of assembly, interacts with CDKN3. Interacts with CDKN3-CDK2 complexes through its binding to CDKN3; this interaction facilitates dissociation of cyclin A from CDKN3-CDK2 complexes. In terms of tissue distribution, expressed specifically in hematopoietic cells and tissues.

Its subcellular location is the endomembrane system. It is found in the cytoplasm. The protein resides in the perinuclear region. Functionally, hematopoietic modulator for the G1-S cell cycle transition. Modulates the level of phosphorylation of cyclin-dependent kinase 2 (CDK2) through its direct binding to cyclin-dependent kinase inhibitor 3 (CDKN3/KAP). This is Membrane-spanning 4-domains subfamily A member 3 (MS4A3) from Homo sapiens (Human).